We begin with the raw amino-acid sequence, 320 residues long: Methionyl-tRNA formyltransferase (320 aa).

Position 117–120 (117–120 (SLLP)) interacts with (6S)-5,6,7,8-tetrahydrofolate.

Belongs to the Fmt family.

It carries out the reaction L-methionyl-tRNA(fMet) + (6R)-10-formyltetrahydrofolate = N-formyl-L-methionyl-tRNA(fMet) + (6S)-5,6,7,8-tetrahydrofolate + H(+). In terms of biological role, attaches a formyl group to the free amino group of methionyl-tRNA(fMet). The formyl group appears to play a dual role in the initiator identity of N-formylmethionyl-tRNA by promoting its recognition by IF2 and preventing the misappropriation of this tRNA by the elongation apparatus. This chain is Methionyl-tRNA formyltransferase, found in Bordetella petrii (strain ATCC BAA-461 / DSM 12804 / CCUG 43448).